We begin with the raw amino-acid sequence, 455 residues long: Tryptophan dimethylallyltransferase (455 aa).

Residues 79 to 80 and Glu88 each bind L-tryptophan; that span reads VL. Substrate contacts are provided by Arg99, Lys186, and Tyr188. Residues Tyr190 and Arg256 each coordinate L-tryptophan. Substrate is bound by residues Arg269, Lys271, Tyr273, Gln355, Tyr357, Tyr421, and Tyr425.

Belongs to the tryptophan dimethylallyltransferase family. In terms of assembly, homodimer.

It catalyses the reaction L-tryptophan + dimethylallyl diphosphate = 4-(3-methylbut-2-enyl)-L-tryptophan + diphosphate. It functions in the pathway alkaloid biosynthesis; ergot alkaloid biosynthesis. In terms of biological role, tryptophan dimethylallyltransferase; part of the gene cluster that mediates the biosynthesis of fungal ergot alkaloid. DmaW catalyzes the first step of ergot alkaloid biosynthesis by condensing dimethylallyl diphosphate (DMAP) and tryptophan to form 4-dimethylallyl-L-tryptophan. The second step is catalyzed by the methyltransferase easF that methylates 4-dimethylallyl-L-tryptophan in the presence of S-adenosyl-L-methionine, resulting in the formation of 4-dimethylallyl-L-abrine. The catalase easC and the FAD-dependent oxidoreductase easE then transform 4-dimethylallyl-L-abrine to chanoclavine-I which is further oxidized by easD in the presence of NAD(+), resulting in the formation of chanoclavine-I aldehyde. Agroclavine dehydrogenase easG then mediates the conversion of chanoclavine-I aldehyde to agroclavine via a non-enzymatic adduct reaction: the substrate is an iminium intermediate that is formed spontaneously from chanoclavine-I aldehyde in the presence of glutathione. Further conversion of agroclavine to paspalic acid is a two-step process involving oxidation of agroclavine to elymoclavine and of elymoclavine to paspalic acid, the second step being performed by the elymoclavine oxidase cloA. However, cloA does not encode a functional enzyme indicating that C.fusiformis terminates its ergot alkaloid pathway at elymoclavine. In Claviceps fusiformis (Ergot fungus), this protein is Tryptophan dimethylallyltransferase.